Here is a 272-residue protein sequence, read N- to C-terminus: Shikimate dehydrogenase (NADP(+)) (272 aa).

Residues 14-16 (SRS) and threonine 61 each bind shikimate. The active-site Proton acceptor is lysine 65. Glutamate 77 is an NADP(+) binding site. Shikimate is bound by residues asparagine 86 and aspartate 102. NADP(+) is bound by residues 126 to 130 (GVGGA), 149 to 154 (NRTFPR), and methionine 213. Residue tyrosine 215 participates in shikimate binding. Glycine 237 provides a ligand contact to NADP(+).

It belongs to the shikimate dehydrogenase family. As to quaternary structure, homodimer.

It catalyses the reaction shikimate + NADP(+) = 3-dehydroshikimate + NADPH + H(+). It participates in metabolic intermediate biosynthesis; chorismate biosynthesis; chorismate from D-erythrose 4-phosphate and phosphoenolpyruvate: step 4/7. In terms of biological role, involved in the biosynthesis of the chorismate, which leads to the biosynthesis of aromatic amino acids. Catalyzes the reversible NADPH linked reduction of 3-dehydroshikimate (DHSA) to yield shikimate (SA). The chain is Shikimate dehydrogenase (NADP(+)) from Sodalis glossinidius (strain morsitans).